We begin with the raw amino-acid sequence, 314 residues long: 3'-5' exoribonuclease YhaM (314 aa).

The HD domain maps to 163–279 (HVVSMLDLAK…LHYIDNLDAK (117 aa)).

It belongs to the YhaM family.

In terms of biological role, shows a 3'-5' exoribonuclease activity. This chain is 3'-5' exoribonuclease YhaM, found in Bacillus mycoides (strain KBAB4) (Bacillus weihenstephanensis).